The primary structure comprises 201 residues: Akirin (201 aa).

The segment at 1-133 (MACATLKRAL…PRRPDSPQNL (133 aa)) is disordered. The short motif at 20-25 (PKRRRC) is the Nuclear localization signal element. 2 positions are modified to phosphoserine: Ser-39 and Ser-41. Polar residues-rich tracts occupy residues 44–57 (GPSTSAGLPHTPSN) and 65–75 (EPSPFSESSLA). Ser-67 is subject to Phosphoserine. Positions 112–122 (SESSGSEMGPE) are enriched in low complexity. Residues Ser-123 and Ser-129 each carry the phosphoserine modification.

Belongs to the akirin family. Interacts with dmap1. Interacts with bap60 and rel; interaction is immune stimulation-dependent; activates selected rel target gene promoters. Interacts with bap55; interaction is immune stimulation-dependent. Interacts with twi. Post-translationally, polyubiquitinated via 'Lys-63'-linked ubiquitin by Hyd, promoting interaction with rel. In terms of tissue distribution, ubiquitous.

The protein localises to the nucleus. Molecular adapter that acts as a bridge between a variety of multiprotein complexes, and which is required for embryonic development and for normal innate immune response. Acts as a regulator of embryonic myogenesis by bridging Twist (twi) with the SWI/SNF-like Brahma complex, promoting expression of twi-regulated genes during myogenesis. Effector of immune deficiency pathway (Imd) by acting either downstream of, or at the level of, the NF-kappa-B factor Relish (Rel). Acts by bridging the NF-kappa-B factor Rel and the Brahma complex through bap60 interaction, leading to activation a subset of NF-kappa-B factor Relish (Rel) effector genes. Not part of the Toll pathway. Required for the formation of the heart by promoting expression ot tinman (tin). The sequence is that of Akirin from Drosophila melanogaster (Fruit fly).